The following is a 103-amino-acid chain: Protein FMC1 homolog (103 aa).

This sequence belongs to the FMC1 family.

The sequence is that of Protein FMC1 homolog from Nematostella vectensis (Starlet sea anemone).